The sequence spans 391 residues: Casein kinase II subunit alpha (391 aa).

Residues 36–41 form an interaction with beta subunit region; it reads QDDYQL. Residues 39–324 form the Protein kinase domain; it reads YQLVRKLGRG…AREAMEHPYF (286 aa). Residues 45 to 53 and Lys-68 contribute to the ATP site; that span reads LGRGKYSEV. Catalysis depends on Asp-156, which acts as the Proton acceptor. Phosphothreonine; by CDK1 is present on residues Thr-344 and Thr-360. Residues Ser-362 and Ser-370 each carry the phosphoserine; by CDK1 modification.

Belongs to the protein kinase superfamily. Ser/Thr protein kinase family. CK2 subfamily. As to quaternary structure, heterotetramer composed of two catalytic subunits (alpha chain and/or alpha' chain) and two regulatory subunits (beta chains). The tetramer can exist as a combination of 2 alpha/2 beta, 2 alpha'/2 beta or 1 alpha/1 alpha'/2 beta subunits. Also part of a CK2-SPT16-SSRP1 complex composed of SSRP1, SUPT16H, CSNK2A1, CSNK2A2 and CSNK2B, which forms following UV irradiation. Interacts with RNPS1. Interacts with SNAI1. Interacts with PML. Interacts with CCAR2. Interacts with HIRIP3. In terms of processing, phosphorylated at Thr-344, Thr-360, Ser-362 and Ser-370 by CDK1 in prophase and metaphase and dephosphorylated during anaphase. Phosphorylation does not directly affect casein kinase 2 activity, but may contribute to its regulation by forming binding sites for interacting proteins and/or targeting it to different compartments.

The protein localises to the nucleus. It catalyses the reaction L-seryl-[protein] + ATP = O-phospho-L-seryl-[protein] + ADP + H(+). The enzyme catalyses L-threonyl-[protein] + ATP = O-phospho-L-threonyl-[protein] + ADP + H(+). With respect to regulation, constitutively active protein kinase whose activity is not directly affected by phosphorylation. Seems to be regulated by level of expression and localization. Catalytic subunit of a constitutively active serine/threonine-protein kinase complex that phosphorylates a large number of substrates containing acidic residues C-terminal to the phosphorylated serine or threonine. Regulates numerous cellular processes, such as cell cycle progression, apoptosis and transcription, as well as viral infection. May act as a regulatory node which integrates and coordinates numerous signals leading to an appropriate cellular response. During mitosis, functions as a component of the p53/TP53-dependent spindle assembly checkpoint (SAC) that maintains cyclin-B-CDK1 activity and G2 arrest in response to spindle damage. Also required for p53/TP53-mediated apoptosis, phosphorylating 'Ser-392' of p53/TP53 following UV irradiation. Phosphorylates a number of DNA repair proteins in response to DNA damage, such as MDC1, MRE11, RAD9A, RAD51 and HTATSF1, promoting their recruitment to DNA damage sites. Can also negatively regulate apoptosis. Phosphorylates the caspases CASP9 and CASP2 and the apoptotic regulator NOL3. Phosphorylation protects CASP9 from cleavage and activation by CASP8, and inhibits the dimerization of CASP2 and activation of CASP8. Phosphorylates YY1, protecting YY1 from cleavage by CASP7 during apoptosis. Regulates transcription by direct phosphorylation of RNA polymerases I, II, III and IV. Also phosphorylates and regulates numerous transcription factors including NF-kappa-B, STAT1, CREB1, IRF1, IRF2, ATF1, ATF4, SRF, MAX, JUN, FOS, MYC and MYB. Phosphorylates Hsp90 and its co-chaperones FKBP4 and CDC37, which is essential for chaperone function. Mediates sequential phosphorylation of FNIP1, promoting its gradual interaction with Hsp90, leading to activate both kinase and non-kinase client proteins of Hsp90. Regulates Wnt signaling by phosphorylating CTNNB1 and the transcription factor LEF1. Acts as an ectokinase that phosphorylates several extracellular proteins. Plays an important role in the circadian clock function by phosphorylating BMAL1 at 'Ser-90' which is pivotal for its interaction with CLOCK and which controls CLOCK nuclear entry. Phosphorylates FMR1, promoting FMR1-dependent formation of a membraneless compartment. May phosphorylate histone H2A on 'Ser-1'. The chain is Casein kinase II subunit alpha (CSNK2A1) from Bos taurus (Bovine).